Reading from the N-terminus, the 358-residue chain is tRNA-specific 2-thiouridylase MnmA (358 aa).

Residues 22–29 and Phe48 each bind ATP; that span reads LVSGGIDS. Catalysis depends on Cys105, which acts as the Nucleophile. Cys105 and Cys201 are oxidised to a cystine. Gly129 contacts ATP. The interval 151 to 153 is interaction with tRNA; sequence KEQ. Cys201 (cysteine persulfide intermediate) is an active-site residue. Residues 306–307 form an interaction with tRNA region; that stretch reads RY.

The protein belongs to the MnmA/TRMU family.

It localises to the cytoplasm. The catalysed reaction is S-sulfanyl-L-cysteinyl-[protein] + uridine(34) in tRNA + AH2 + ATP = 2-thiouridine(34) in tRNA + L-cysteinyl-[protein] + A + AMP + diphosphate + H(+). In terms of biological role, catalyzes the 2-thiolation of uridine at the wobble position (U34) of tRNA, leading to the formation of s(2)U34. This Desulfosudis oleivorans (strain DSM 6200 / JCM 39069 / Hxd3) (Desulfococcus oleovorans) protein is tRNA-specific 2-thiouridylase MnmA.